The primary structure comprises 352 residues: Holliday junction branch migration complex subunit RuvB (352 aa).

The large ATPase domain (RuvB-L) stretch occupies residues 4–185 (PDRLISAVSG…FGIVQRLEFY (182 aa)). ATP is bound by residues Ile-24, Arg-25, Gly-66, Lys-69, Thr-70, Thr-71, 132-134 (EDF), Arg-175, Tyr-185, and Arg-222. Thr-70 provides a ligand contact to Mg(2+). The interval 186-256 (NVEDLATIVS…IADKALNLLD (71 aa)) is small ATPAse domain (RuvB-S). Residues 259–352 (ERGFDHLDRR…SDLFTSEDGN (94 aa)) are head domain (RuvB-H). Positions 295, 314, and 319 each coordinate DNA.

This sequence belongs to the RuvB family. Homohexamer. Forms an RuvA(8)-RuvB(12)-Holliday junction (HJ) complex. HJ DNA is sandwiched between 2 RuvA tetramers; dsDNA enters through RuvA and exits via RuvB. An RuvB hexamer assembles on each DNA strand where it exits the tetramer. Each RuvB hexamer is contacted by two RuvA subunits (via domain III) on 2 adjacent RuvB subunits; this complex drives branch migration. In the full resolvosome a probable DNA-RuvA(4)-RuvB(12)-RuvC(2) complex forms which resolves the HJ.

The protein localises to the cytoplasm. It carries out the reaction ATP + H2O = ADP + phosphate + H(+). Its function is as follows. The RuvA-RuvB-RuvC complex processes Holliday junction (HJ) DNA during genetic recombination and DNA repair, while the RuvA-RuvB complex plays an important role in the rescue of blocked DNA replication forks via replication fork reversal (RFR). RuvA specifically binds to HJ cruciform DNA, conferring on it an open structure. The RuvB hexamer acts as an ATP-dependent pump, pulling dsDNA into and through the RuvAB complex. RuvB forms 2 homohexamers on either side of HJ DNA bound by 1 or 2 RuvA tetramers; 4 subunits per hexamer contact DNA at a time. Coordinated motions by a converter formed by DNA-disengaged RuvB subunits stimulates ATP hydrolysis and nucleotide exchange. Immobilization of the converter enables RuvB to convert the ATP-contained energy into a lever motion, pulling 2 nucleotides of DNA out of the RuvA tetramer per ATP hydrolyzed, thus driving DNA branch migration. The RuvB motors rotate together with the DNA substrate, which together with the progressing nucleotide cycle form the mechanistic basis for DNA recombination by continuous HJ branch migration. Branch migration allows RuvC to scan DNA until it finds its consensus sequence, where it cleaves and resolves cruciform DNA. This chain is Holliday junction branch migration complex subunit RuvB, found in Pseudomonas paraeruginosa (strain DSM 24068 / PA7) (Pseudomonas aeruginosa (strain PA7)).